A 403-amino-acid polypeptide reads, in one-letter code: Prostaglandin E2 receptor EP1 subtype (403 aa).

The Extracellular segment spans residues 1 to 38; the sequence is MSLCGPLNLSLAGEATPCAEPGAPNASAWPPSGRASAS. Residues asparagine 8 and asparagine 25 are each glycosylated (N-linked (GlcNAc...) asparagine). Residues 39–65 form a helical membrane-spanning segment; sequence PALPIFSMTLGAVSNVLALALLAQAAG. The Cytoplasmic segment spans residues 66 to 75; that stretch reads RLRRRRSAAT. The helical transmembrane segment at 76-99 threads the bilayer; that stretch reads FLLFVASLLATDLAGHVIPGALVL. The Extracellular portion of the chain corresponds to 100–114; that stretch reads RLYAAGRSPAGGACH. An intrachain disulfide couples cysteine 113 to cysteine 191. Residues 115–136 form a helical membrane-spanning segment; it reads FLGGCMVFFGLCPLLLGCGMAV. The Cytoplasmic portion of the chain corresponds to 137-158; it reads ERCVGVTRPLLHAARVSAARAR. The chain crosses the membrane as a helical span at residues 159–180; sequence LALAVLAALALAVALLPLARVG. Residues 181-204 are Extracellular-facing; the sequence is RYELQYPGTWCFIGLRPAGGWRQA. The helical transmembrane segment at 205–230 threads the bilayer; the sequence is LLAGLFAGLGLAALLAALVCNTLSGL. Topologically, residues 231–295 are cytoplasmic; that stretch reads ALLRARWRRR…ARRARAHDVE (65 aa). The disordered stretch occupies residues 243 to 287; sequence RRRPQACGPDGRRHWGARAPRSASASSSSSVASVPGGSPGRGSAR. Over residues 259-278 the composition is skewed to low complexity; that stretch reads ARAPRSASASSSSSVASVPG. Residues 296–322 form a helical membrane-spanning segment; it reads MVGQLVGIMVVSCICWSPLLVLVVLAV. Residues 323-333 lie on the Extracellular side of the membrane; it reads GGWGSSSLQRP. Residues 334 to 355 traverse the membrane as a helical segment; that stretch reads LFLAVRLASWNQILDPWVYILL. Topologically, residues 356 to 403 are cytoplasmic; it reads RQAVLRQLLRLLPPRPGAKGSPAGLALTRSAWEASSLRSSRHSSLSHL.

The protein belongs to the G-protein coupled receptor 1 family.

It localises to the cell membrane. In terms of biological role, receptor for prostaglandin E2 (PGE2). The activity of this receptor is mediated by G(q) proteins which activate a phosphatidylinositol-calcium second messenger system. May play a role as an important modulator of renal function. Implicated the smooth muscle contractile response to PGE2 in various tissues. The polypeptide is Prostaglandin E2 receptor EP1 subtype (PTGER1) (Canis lupus familiaris (Dog)).